The chain runs to 692 residues: Protein artemis (692 aa).

T380 carries the phosphothreonine modification. Position 385 is a phosphoserine (S385). 2 disordered regions span residues 504-555 (LENF…DSQS) and 640-664 (STNA…LPKR). Over residues 506–520 (NFPSSTVAGGSQSPK) the composition is skewed to polar residues. The span at 530–543 (THISSQNSSQSTHI) shows a compositional bias: low complexity. Composition is skewed to polar residues over residues 544-555 (TEQGSQGWDSQS) and 640-650 (STNADSQSSSD). S645 is modified (phosphoserine; by ATM).

Belongs to the DNA repair metallo-beta-lactamase (DRMBL) family. Interacts with LIG4; the interaction is direct. Interacts with ATM. Interacts with BRCA1. Interacts with PRKDC. Interacts with TP53BP1. Also exhibits ATM- and phosphorylation-dependent interaction with the MRN complex, composed of MRE11, RAD50, and NBN. In terms of processing, phosphorylation on undefined residues by PRKDC may stimulate endonucleolytic activity on 5' and 3' hairpins and overhangs. PRKDC must remain present, even after phosphorylation, for efficient hairpin opening. Also phosphorylated by ATM in response to ionizing radiation (IR) and by ATR in response to ultraviolet (UV) radiation. As to expression, ubiquitously expressed, with highest levels in the kidney, lung, pancreas and placenta (at the mRNA level). Expression is not increased in thymus or bone marrow, sites of V(D)J recombination.

Its subcellular location is the nucleus. Nuclease involved in DNA non-homologous end joining (NHEJ); required for double-strand break repair and V(D)J recombination. Required for V(D)J recombination, the process by which exons encoding the antigen-binding domains of immunoglobulins and T-cell receptor proteins are assembled from individual V, (D), and J gene segments. V(D)J recombination is initiated by the lymphoid specific RAG endonuclease complex, which generates site specific DNA double strand breaks (DSBs). These DSBs present two types of DNA end structures: hairpin sealed coding ends and phosphorylated blunt signal ends. These ends are independently repaired by the non homologous end joining (NHEJ) pathway to form coding and signal joints respectively. This protein exhibits single-strand specific 5'-3' exonuclease activity in isolation and acquires endonucleolytic activity on 5' and 3' hairpins and overhangs when in a complex with PRKDC. The latter activity is required specifically for the resolution of closed hairpins prior to the formation of the coding joint. Also required for the repair of complex DSBs induced by ionizing radiation, which require substantial end-processing prior to religation by NHEJ. The sequence is that of Protein artemis from Homo sapiens (Human).